Reading from the N-terminus, the 331-residue chain is Activator of 90 kDa heat shock protein ATPase homolog 2 (331 aa).

Belongs to the AHA1 family.

In terms of biological role, co-chaperone that stimulates HSP90 ATPase activity. This is Activator of 90 kDa heat shock protein ATPase homolog 2 (Ahsa2) from Mus musculus (Mouse).